A 165-amino-acid chain; its full sequence is Deoxyuridine 5'-triphosphate nucleotidohydrolase (165 aa).

The protein belongs to the dUTPase family. As to quaternary structure, homotrimer. It depends on Mg(2+) as a cofactor.

It is found in the host cytoplasm. The protein resides in the virion. The enzyme catalyses dUTP + H2O = dUMP + diphosphate + H(+). Functionally, the viral dUTPase may play a role in lowering the dUTP concentration in natural infections to minimize misincorporation of deoxyuridine into the viral DNA and ensure the fidelity of genome replication. This is Deoxyuridine 5'-triphosphate nucleotidohydrolase from Ornithodoros (relapsing fever ticks).